Reading from the N-terminus, the 98-residue chain is NADH-ubiquinone oxidoreductase chain 4L (98 aa).

Helical transmembrane passes span 1-21, 29-49, and 61-81; these read MTLI…GLLM, ALLC…LTIL, and IILL…LVMV.

It belongs to the complex I subunit 4L family. Core subunit of respiratory chain NADH dehydrogenase (Complex I) which is composed of 45 different subunits.

The protein localises to the mitochondrion inner membrane. It carries out the reaction a ubiquinone + NADH + 5 H(+)(in) = a ubiquinol + NAD(+) + 4 H(+)(out). In terms of biological role, core subunit of the mitochondrial membrane respiratory chain NADH dehydrogenase (Complex I) which catalyzes electron transfer from NADH through the respiratory chain, using ubiquinone as an electron acceptor. Part of the enzyme membrane arm which is embedded in the lipid bilayer and involved in proton translocation. The chain is NADH-ubiquinone oxidoreductase chain 4L (MT-ND4L) from Balaenoptera bonaerensis (Antarctic minke whale).